We begin with the raw amino-acid sequence, 328 residues long: V-type sodium ATPase subunit C (328 aa).

It belongs to the V-ATPase V0D/AC39 subunit family.

In terms of biological role, involved in ATP-driven sodium extrusion. This Enterococcus hirae (strain ATCC 9790 / DSM 20160 / JCM 8729 / LMG 6399 / NBRC 3181 / NCIMB 6459 / NCDO 1258 / NCTC 12367 / WDCM 00089 / R) protein is V-type sodium ATPase subunit C (ntpC).